The following is a 785-amino-acid chain: Altered inheritance of mitochondria protein 3-2 (785 aa).

Disordered stretches follow at residues 33–122 (TGYQ…QPYM), 142–406 (QQVA…SENL), and 418–785 (NVDV…RLHK). The segment covering 91-102 (GSSGNSANGSSA) has biased composition (low complexity). 2 stretches are compositionally biased toward polar residues: residues 103–122 (TIPTLSNTNNTAQLNEQPYM) and 143–199 (QVAT…QLNI). Residues 249–260 (KPYDWEEQKTTK) are compositionally biased toward basic and acidic residues. 5 stretches are compositionally biased toward polar residues: residues 283-310 (SRQGSNSTPPSRTHTGNNTSTASVTTTG), 350-366 (ATNNSSDLKLSGAQNTK), 375-388 (TNKSAERPNSSNVM), 395-405 (QMNTKANSSEN), and 455-465 (SSISRDNYNSI). Residues 478–497 (NTGEREGAQELKADIAERSQ) show a composition bias toward basic and acidic residues. Over residues 527–556 (AQTSSDIPQKSSLVTDESNISVPNKSQQPM) the composition is skewed to polar residues. 2 stretches are compositionally biased toward basic and acidic residues: residues 587–613 (KSLEESHTPSNKLSEKPKPPKKPEQLK) and 624–637 (KNMKNKDQLFDNKN). The span at 659–671 (SLTSEGNHMNLNT) shows a compositional bias: polar residues. 2 stretches are compositionally biased toward basic and acidic residues: residues 672–686 (EKGKETTIEKPDESK) and 700–710 (FKREELSKEVV).

Belongs to the AIM3 family.

It localises to the membrane raft. This is Altered inheritance of mitochondria protein 3-2 (AIM3-2) from Candida glabrata (strain ATCC 2001 / BCRC 20586 / JCM 3761 / NBRC 0622 / NRRL Y-65 / CBS 138) (Yeast).